We begin with the raw amino-acid sequence, 61 residues long: Metallothionein-2 (61 aa).

M1 is subject to N-acetylmethionine. A beta region spans residues 1–29 (MDPNCSCASDGSCSCAGACKCKQCKCTSC). Positions 5, 7, 13, 15, 19, 21, 24, 26, 29, 33, 34, 36, 37, 41, 44, 48, 50, and 57 each coordinate a divalent metal cation. The segment at 30-61 (KKSCCSCCPVGCAKCSQGCICKEASDKCSCCA) is alpha. S58 is subject to Phosphoserine. 2 residues coordinate a divalent metal cation: C59 and C60.

It belongs to the metallothionein superfamily. Type 1 family.

Its function is as follows. Metallothioneins have a high content of cysteine residues that bind various heavy metals; these proteins are transcriptionally regulated by both heavy metals and glucocorticoids. The polypeptide is Metallothionein-2 (Mt2) (Mus musculus (Mouse)).